The sequence spans 150 residues: 3-hydroxyacyl-[acyl-carrier-protein] dehydratase FabZ (150 aa).

Residue His-47 is part of the active site.

It belongs to the thioester dehydratase family. FabZ subfamily.

The protein localises to the cytoplasm. The enzyme catalyses a (3R)-hydroxyacyl-[ACP] = a (2E)-enoyl-[ACP] + H2O. In terms of biological role, involved in unsaturated fatty acids biosynthesis. Catalyzes the dehydration of short chain beta-hydroxyacyl-ACPs and long chain saturated and unsaturated beta-hydroxyacyl-ACPs. The sequence is that of 3-hydroxyacyl-[acyl-carrier-protein] dehydratase FabZ from Verminephrobacter eiseniae (strain EF01-2).